Consider the following 520-residue polypeptide: Cysteine--tRNA ligase (520 aa).

Cys29 is a binding site for Zn(2+). A 'HIGH' region motif is present at residues Pro31–Asn41. The Zn(2+) site is built by Cys227, His252, and Glu256. Positions Lys301–Ser305 match the 'KMSKS' region motif. Lys304 provides a ligand contact to ATP.

Belongs to the class-I aminoacyl-tRNA synthetase family. Monomer. It depends on Zn(2+) as a cofactor.

The protein localises to the cytoplasm. The enzyme catalyses tRNA(Cys) + L-cysteine + ATP = L-cysteinyl-tRNA(Cys) + AMP + diphosphate. This chain is Cysteine--tRNA ligase (cysS), found in Treponema pallidum (strain Nichols).